Consider the following 252-residue polypeptide: 5-oxoprolinase subunit A (252 aa).

It belongs to the LamB/PxpA family. As to quaternary structure, forms a complex composed of PxpA, PxpB and PxpC.

The enzyme catalyses 5-oxo-L-proline + ATP + 2 H2O = L-glutamate + ADP + phosphate + H(+). Functionally, catalyzes the cleavage of 5-oxoproline to form L-glutamate coupled to the hydrolysis of ATP to ADP and inorganic phosphate. The sequence is that of 5-oxoprolinase subunit A from Staphylococcus epidermidis (strain ATCC 35984 / DSM 28319 / BCRC 17069 / CCUG 31568 / BM 3577 / RP62A).